The chain runs to 310 residues: Aspartate carbamoyltransferase catalytic subunit (310 aa).

Carbamoyl phosphate-binding residues include R59 and T60. K87 provides a ligand contact to L-aspartate. Carbamoyl phosphate is bound by residues R109, H139, and Q142. 2 residues coordinate L-aspartate: R172 and R224. Positions 265 and 266 each coordinate carbamoyl phosphate.

It belongs to the aspartate/ornithine carbamoyltransferase superfamily. ATCase family. As to quaternary structure, heterododecamer (2C3:3R2) of six catalytic PyrB chains organized as two trimers (C3), and six regulatory PyrI chains organized as three dimers (R2).

It carries out the reaction carbamoyl phosphate + L-aspartate = N-carbamoyl-L-aspartate + phosphate + H(+). It functions in the pathway pyrimidine metabolism; UMP biosynthesis via de novo pathway; (S)-dihydroorotate from bicarbonate: step 2/3. Catalyzes the condensation of carbamoyl phosphate and aspartate to form carbamoyl aspartate and inorganic phosphate, the committed step in the de novo pyrimidine nucleotide biosynthesis pathway. The protein is Aspartate carbamoyltransferase catalytic subunit of Lactococcus lactis subsp. cremoris (strain MG1363).